A 198-amino-acid chain; its full sequence is 3-isopropylmalate dehydratase small subunit (198 aa).

This sequence belongs to the LeuD family. LeuD type 1 subfamily. Heterodimer of LeuC and LeuD.

It carries out the reaction (2R,3S)-3-isopropylmalate = (2S)-2-isopropylmalate. Its pathway is amino-acid biosynthesis; L-leucine biosynthesis; L-leucine from 3-methyl-2-oxobutanoate: step 2/4. Functionally, catalyzes the isomerization between 2-isopropylmalate and 3-isopropylmalate, via the formation of 2-isopropylmaleate. The sequence is that of 3-isopropylmalate dehydratase small subunit from Corynebacterium jeikeium (strain K411).